Here is a 529-residue protein sequence, read N- to C-terminus: Beta-glucosidase 11 (529 aa).

The first 25 residues, 1-25 (MAVAGAMVMSGALLLLHLLAFTCVA), serve as a signal peptide directing secretion. A beta-D-glucoside is bound by residues glutamine 54, histidine 157, and 202–203 (NE). Glutamate 203 serves as the catalytic Proton donor. Cysteines 222 and 230 form a disulfide. Tyrosine 346 provides a ligand contact to a beta-D-glucoside. The N-linked (GlcNAc...) asparagine glycan is linked to asparagine 361. Residue glutamate 417 participates in a beta-D-glucoside binding. The active-site Nucleophile is the glutamate 417. N-linked (GlcNAc...) asparagine glycosylation is present at asparagine 425. Residues tryptophan 466, 473–474 (EW), and phenylalanine 482 each bind a beta-D-glucoside.

It belongs to the glycosyl hydrolase 1 family.

The enzyme catalyses Hydrolysis of terminal, non-reducing beta-D-glucosyl residues with release of beta-D-glucose.. The chain is Beta-glucosidase 11 (BGLU11) from Oryza sativa subsp. japonica (Rice).